The primary structure comprises 673 residues: Citrate exporter 1 (673 aa).

Residues 1 to 44 (MFNLNTKSSKEPEVTEVAVDSTPSSPVTRESSPESSPDNSAVDL) form a disordered region. Positions 21 to 39 (STPSSPVTRESSPESSPDN) are enriched in polar residues. A helical membrane pass occupies residues 67 to 87 (FLVFGAMAFCMLVSFMDQNGI). Residue Asn-99 is glycosylated (N-linked (GlcNAc...) asparagine). The next 4 membrane-spanning stretches (helical) occupy residues 103–123 (TISW…VLYG), 133–153 (LVFM…ACAQ), 164–184 (FSGI…SDIV), and 194–214 (GILG…GAAF). Residue Asn-217 is glycosylated (N-linked (GlcNAc...) asparagine). Transmembrane regions (helical) follow at residues 222-242 (AIFY…FFIL), 261-281 (PGLF…AGGG), 292-312 (ISML…EGFF), 322-342 (IFGT…GIAY), 364-384 (AAGM…ISGQ), 393-413 (LEVI…KCFW), 419-439 (MALL…CFQP), and 465-485 (SFGG…SLKA). Asn-526 carries an N-linked (GlcNAc...) asparagine glycan. Residues 529–549 (HTVFVFLCPIVGACLLVTVFV) form a helical membrane-spanning segment. Positions 564–596 (AKTVEDKDKDESGTDCEDMTKGEVLVSEKEGKL) are enriched in basic and acidic residues. 2 disordered regions span residues 564-608 (AKTV…MHFG) and 636-673 (FPPM…IQEE). N-linked (GlcNAc...) asparagine glycans are attached at residues Asn-599 and Asn-662.

This sequence belongs to the major facilitator superfamily.

It localises to the cell membrane. It catalyses the reaction citrate(in) = citrate(out). In terms of biological role, transmembrane transporter that exports citrate across the cell membrane. This chain is Citrate exporter 1, found in Yarrowia lipolytica (strain CLIB 122 / E 150) (Yeast).